The following is a 274-amino-acid chain: Diaminopimelate epimerase (274 aa).

Substrate is bound by residues Asn11 and Asn65. Cys74 acts as the Proton donor in catalysis. Substrate is bound by residues 75-76 (GN), Asn158, Asn191, and 209-210 (ER). Residue Cys218 is the Proton acceptor of the active site. 219-220 (GT) contacts substrate.

This sequence belongs to the diaminopimelate epimerase family. Homodimer.

It localises to the cytoplasm. It catalyses the reaction (2S,6S)-2,6-diaminopimelate = meso-2,6-diaminopimelate. The protein operates within amino-acid biosynthesis; L-lysine biosynthesis via DAP pathway; DL-2,6-diaminopimelate from LL-2,6-diaminopimelate: step 1/1. Its function is as follows. Catalyzes the stereoinversion of LL-2,6-diaminopimelate (L,L-DAP) to meso-diaminopimelate (meso-DAP), a precursor of L-lysine and an essential component of the bacterial peptidoglycan. The chain is Diaminopimelate epimerase from Carboxydothermus hydrogenoformans (strain ATCC BAA-161 / DSM 6008 / Z-2901).